Reading from the N-terminus, the 2698-residue chain is Zinc finger protein 292 (2698 aa).

The C2H2-type 1 zinc finger occupies 567-589 (YSCPICAKNFNSKDSFVPHVTLH). At Ser654 the chain carries Phosphoserine. 6 consecutive C2H2-type zinc fingers follow at residues 681–705 (FNCP…VKGH), 722–744 (VICQ…LQMH), 750–774 (YICI…RKEH), 779–803 (AKCL…EAQH), 807–831 (YTCK…QDGH), and 1085–1110 (FSCQ…KTAH). A compositionally biased stretch (basic and acidic residues) spans 822 to 834 (SEMEKHQDGHSHP). The tract at residues 822-894 (SEMEKHQDGH…AEPAVTKHGQ (73 aa)) is disordered. An N6-acetyllysine modification is found at Lys1104. Ser1146 bears the Phosphoserine mark. Polar residues predominate over residues 1278 to 1325 (NSTNHYPSQTDGNINSSFLKGGSSENGVFPSQVSSADDFSSTSAQPST). The interval 1278–1349 (NSTNHYPSQT…KERKPKHNKR (72 aa)) is disordered. The segment at 1361–1383 (FICSRCYRAFTNPRSLGGHLSKR) adopts a C2H2-type 8; degenerate zinc-finger fold. 2 stretches are compositionally biased toward polar residues: residues 1574–1603 (FSSS…TRSS) and 1624–1633 (SVSNTSQNVL). The disordered stretch occupies residues 1574–1656 (FSSSTEPPQN…PVPDTNTRSD (83 aa)). 2 consecutive C2H2-type zinc fingers follow at residues 1879 to 1904 (FVCQ…GKIH) and 1924 to 1949 (FKCV…QLVH). The tract at residues 1964 to 1997 (PYGRKSQSENLSSPQNNQVKKQPSMAEETKTESQ) is disordered. The span at 1971–1984 (SENLSSPQNNQVKK) shows a compositional bias: polar residues. Lys2020 bears the N6-acetyllysine mark. A compositionally biased stretch (basic and acidic residues) spans 2021–2032 (QLAEKKSPEKPE). The interval 2021 to 2075 (QLAEKKSPEKPESSSQPVTSSAEQYNANLANLKTKGRKNKRHRKEKEEKREKNPV) is disordered. Residues 2038-2051 (VTSSAEQYNANLAN) are compositionally biased toward polar residues. The span at 2054–2064 (TKGRKNKRHRK) shows a compositional bias: basic residues. 4 C2H2-type zinc fingers span residues 2091–2116 (YCCV…QAVH), 2149–2174 (FRCQ…MKLH), 2193–2218 (FPCD…EVDH), and 2233–2258 (YKCD…FNKH). Residues 2262–2271 (HKAHLIRPRK) are compositionally biased toward basic residues. Positions 2262–2323 (HKAHLIRPRK…KSNLENKSAK (62 aa)) are disordered. A C2H2-type 15 zinc finger spans residues 2362-2386 (YPCMIKGCTSVVTSESNIIRHYKCH). Disordered regions lie at residues 2411–2454 (GKEI…GEKD), 2467–2553 (LINE…EEHP), and 2580–2608 (KQKK…HVDK). Over residues 2421 to 2437 (KNDKKDPDSSVLEKNDN) the composition is skewed to basic and acidic residues. Residues 2470–2488 (EDSTNAENQGNTTLKGNNE) are compositionally biased toward polar residues. Composition is skewed to basic and acidic residues over residues 2489 to 2501 (FQEH…ERQK) and 2580 to 2590 (KQKKNSDRDHS). Positions 2596-2606 (RGSHSSSRRHV) are enriched in basic residues.

Belongs to the krueppel C2H2-type zinc-finger protein family. As to expression, expressed in postnatal day 1 (P1) pituitary. Also detected in presomatotrophic cell line GHFT1-5.

Its subcellular location is the nucleus. May be involved in transcriptional regulation. The chain is Zinc finger protein 292 from Mus musculus (Mouse).